Reading from the N-terminus, the 77-residue chain is Large ribosomal subunit protein eL20 (77 aa).

The protein belongs to the eukaryotic ribosomal protein eL20 family. As to quaternary structure, part of the 50S ribosomal subunit. Binds 23S rRNA.

The polypeptide is Large ribosomal subunit protein eL20 (Pyrococcus abyssi (strain GE5 / Orsay)).